Consider the following 333-residue polypeptide: Probable pyridoxal reductase 2 (333 aa).

Y52 (proton donor) is an active-site residue.

It belongs to the aldo/keto reductase family.

Its subcellular location is the cytoplasm. It catalyses the reaction pyridoxine + NADP(+) = pyridoxal + NADPH + H(+). Functionally, catalyzes the reduction of pyridoxal (PL) with NADPH and oxidation of pyridoxine (PN) with NADP(+). This is Probable pyridoxal reductase 2 from Schizosaccharomyces pombe (strain 972 / ATCC 24843) (Fission yeast).